A 79-amino-acid polypeptide reads, in one-letter code: Hemoglobin subunit zeta (79 aa).

At serine 1 the chain carries N-acetylserine. Residues 1–79 (SLTKTXXTII…FKLLSHXFLV (79 aa)) form the Globin domain. Residues serine 38 and serine 53 each carry the phosphoserine modification. Heme b is bound at residue histidine 59.

Belongs to the globin family. As to quaternary structure, heterotetramer of two zeta chains and two epsilon chains.

The zeta chain is an alpha-type chain of mammalian embryonic hemoglobin. In Notamacropus eugenii (Tammar wallaby), this protein is Hemoglobin subunit zeta.